A 130-amino-acid chain; its full sequence is Ribosome-binding factor A (130 aa).

This sequence belongs to the RbfA family. In terms of assembly, monomer. Binds 30S ribosomal subunits, but not 50S ribosomal subunits or 70S ribosomes.

The protein localises to the cytoplasm. In terms of biological role, one of several proteins that assist in the late maturation steps of the functional core of the 30S ribosomal subunit. Associates with free 30S ribosomal subunits (but not with 30S subunits that are part of 70S ribosomes or polysomes). Required for efficient processing of 16S rRNA. May interact with the 5'-terminal helix region of 16S rRNA. The chain is Ribosome-binding factor A from Prochlorococcus marinus (strain SARG / CCMP1375 / SS120).